Reading from the N-terminus, the 418-residue chain is Tyrosine--tRNA ligase (418 aa).

L-tyrosine is bound at residue tyrosine 34. Residues 39-48 carry the 'HIGH' region motif; that stretch reads PTADSLHLGH. L-tyrosine is bound by residues tyrosine 169 and glutamine 173. Residues 229–233 carry the 'KMSKS' region motif; it reads KFGKS. Lysine 232 lines the ATP pocket. The S4 RNA-binding domain occupies 352-418; it reads LNIVDMLVTA…GKKKYAVLTY (67 aa).

It belongs to the class-I aminoacyl-tRNA synthetase family. TyrS type 1 subfamily. Homodimer.

Its subcellular location is the cytoplasm. It catalyses the reaction tRNA(Tyr) + L-tyrosine + ATP = L-tyrosyl-tRNA(Tyr) + AMP + diphosphate + H(+). Its function is as follows. Catalyzes the attachment of tyrosine to tRNA(Tyr) in a two-step reaction: tyrosine is first activated by ATP to form Tyr-AMP and then transferred to the acceptor end of tRNA(Tyr). In Streptococcus equi subsp. zooepidemicus (strain H70), this protein is Tyrosine--tRNA ligase.